The following is a 752-amino-acid chain: MAP/microtubule affinity-regulating kinase 4 (752 aa).

Residues 1 to 36 (MSSRTALAPGNDRNSDTHGTLGSGRSSDKGPSWSSR) form a disordered region. In terms of domain architecture, Protein kinase spans 59–310 (YRLLRTIGKG…LEQIMKDKWI (252 aa)). Residues 65-73 (IGKGNFAKV) and Lys88 each bind ATP. Residue Asp181 is the Proton acceptor of the active site. Thr214 is subject to Phosphothreonine; by LKB1. Positions 324 to 368 (EPEEDFGDTKRIEVMVGMGYTREEIKEALTNQKYNEVTATYLLLG) constitute a UBA domain. Residues 385 to 615 (ARVRAPSDTT…SGRPRPTTNL (231 aa)) are disordered. A compositionally biased stretch (low complexity) spans 391 to 406 (SDTTNGTSSSKGSSHN). A phosphoserine mark is found at Ser423 and Ser543. Low complexity predominate over residues 544–553 (PSSHSLAPPS). A KA1 domain is found at 703–752 (AGGPEPLSHFEVEVCQLPRPGLRGVLFRRVAGTALAFRTLVTRISNDLEL).

This sequence belongs to the protein kinase superfamily. CAMK Ser/Thr protein kinase family. SNF1 subfamily. In terms of assembly, interacts with MAPT/TAU. Interacts with gamma-tubulin. Interacts with ODF2. Interacts with USP9X. Interacts with YWHAQ. Interacts with NLRP3; promoting NLRP3 recruitment to microtubule organizing center (MTOC). Requires Mg(2+) as cofactor. Post-translationally, ubiquitinated with 'Lys-29'- and 'Lys-33'-linked polyubiquitins which appear to impede LKB1-mediated phosphorylation. Deubiquitinated by USP9X. Phosphorylated at Thr-214 by STK11/LKB1 in complex with STE20-related adapter-alpha (STRADA) pseudo kinase and CAB39. Phosphorylated throughout the cell cycle. Isoform 1 and isoform 2 show similar expression patterns in the central nervous system and are present in the same subsets of neurons including pyramidal and non-pyramidal neurons in the cerebral cortex and hippocampus, cerebellar Purkinje cells, and interneurons and motor neurons in the spinal cord but not in glial cells (at protein level). Isoform 2 is the major isoform in brain and cerebellum. Also expressed in spleen, liver, small intestine, colon, kidney, tongue, testis and lung. Isoform 1 and isoform 2 are expressed at similar levels in heart.

The protein resides in the cytoplasm. The protein localises to the cytoskeleton. Its subcellular location is the microtubule organizing center. It localises to the centrosome. It is found in the cilium axoneme. The protein resides in the cilium basal body. The protein localises to the cell projection. Its subcellular location is the dendrite. It catalyses the reaction L-seryl-[protein] + ATP = O-phospho-L-seryl-[protein] + ADP + H(+). The catalysed reaction is L-threonyl-[protein] + ATP = O-phospho-L-threonyl-[protein] + ADP + H(+). Its activity is regulated as follows. Activated by phosphorylation on Thr-214. Serine/threonine-protein kinase. Phosphorylates the microtubule-associated protein MAPT/TAU. Also phosphorylates the microtubule-associated proteins MAP2 and MAP4. Involved in regulation of the microtubule network, causing reorganization of microtubules into bundles. Required for the initiation of axoneme extension during cilium assembly. Regulates the centrosomal location of ODF2 and phosphorylates ODF2 in vitro. Plays a role in cell cycle progression, specifically in the G1/S checkpoint. Reduces neuronal cell survival. Plays a role in energy homeostasis by regulating satiety and metabolic rate. Promotes adipogenesis by activating JNK1 and inhibiting the p38MAPK pathway, and triggers apoptosis by activating the JNK1 pathway. Phosphorylates mTORC1 complex member RPTOR and acts as a negative regulator of the mTORC1 complex, probably due to disruption of the interaction between phosphorylated RPTOR and the RRAGA/RRAGC heterodimer which is required for mTORC1 activation. Involved in NLRP3 positioning along microtubules by mediating NLRP3 recruitment to microtubule organizing center (MTOC) upon inflammasome activation. The sequence is that of MAP/microtubule affinity-regulating kinase 4 from Mus musculus (Mouse).